We begin with the raw amino-acid sequence, 338 residues long: MELWGRMLWALLSGPGRRGSTRGWAFSSWQPQPPLAGLSSAIELVSHWTGVFEKRGIPEARESSEYIVAHVLGAKTFQSLRPALWTQPLTSQQLQCIRELSSRRLQRMPVQYILGEWDFQGLSLRMVPPVFIPRPETEELVEWVLEEVAQRSHAVGSPGSPLILEVGCGSGAISLSLLSQLPQSRVIAVDKREAAISLTHENAQRLRLQDRIWIIHLDMTSERSWTHLPWGPMDLIVSNPPYVFHQDMEQLAPEIRSYEDPAALDGGEEGMDIITHILALAPRLLKDSGSIFLEVDPRHPELVSSWLQSRPDLYLNLVAVRRDFCGRPRFLHIRRSGP.

S-adenosyl-L-methionine is bound by residues 167-171 (GCGSG), Asp-190, Trp-225, and Asn-239. 239–242 (NPPY) contributes to the substrate binding site.

The protein belongs to the protein N5-glutamine methyltransferase family.

It localises to the mitochondrion. The enzyme catalyses L-glutaminyl-[peptide chain release factor] + S-adenosyl-L-methionine = N(5)-methyl-L-glutaminyl-[peptide chain release factor] + S-adenosyl-L-homocysteine + H(+). In terms of biological role, N5-glutamine methyltransferase responsible for the methylation of the glutamine residue in the universally conserved GGQ motif of the mitochondrial translation release factors MTRF1, MTRF1L, MRPL58/ICT1 and MTRFR. This chain is MTRF1L release factor glutamine methyltransferase (HEMK1), found in Homo sapiens (Human).